A 428-amino-acid chain; its full sequence is MAGAASSDRLVTSFPLLDTADLFQDLSLGSDANEVPMNFTKGSFQHPYGHAPYGASSHGSERRPNMNAGNLLNGGDSIGSYPWGYIPANYPSGGYPDPRFGYDRNSNHSSFSHLMNPHSSQEVPSFDQLGYNDHLYSNHGLYGLYGNVIDSGHAYGTFGYDSWKLGRGWYPVDGYRKTRSFNHGRGYSDEKADRLNELCRGPRSSDFKNPQVLNSSMLDAMKQDVSAVDLQRYNGENFPESFVKAKFFVIKSYSEDDVHNCIKYGAWSSTPTGNKKLNAAYYEAKENSQECPVYLLFSVNASGQFVGLAEMVGPVDFNKTMEYWQQDKWIGCFPVKWHIIKDIPNSLLRHITLANNENKPVTNSRDTQEVNLEHGTKIIKIFKEYMSKTCILDDYKFYETRQKIIRDKKIKQKKQALDGASGETINLS.

Positions 245–382 constitute a YTH domain; the sequence is AKFFVIKSYS…EHGTKIIKIF (138 aa). Residues 251–253, D257, 267–268, N300, W324, W329, and W337 contribute to the RNA site; these read KSY and WS.

In terms of assembly, interacts (via C-terminus) with CIPK1. In terms of tissue distribution, expressed in root apex, shoot apex, lateral root primordia, stamens, carpels and trichomes.

It localises to the nucleus. Its subcellular location is the cytoplasm. Its function is as follows. Specifically recognizes and binds N6-methyladenosine (m6A)-containing RNAs, and regulates mRNA stability. M6A is a modification present at internal sites of mRNAs and some non-coding RNAs and plays a role in mRNA stability and processing. The protein is YTH domain-containing protein ECT1 of Arabidopsis thaliana (Mouse-ear cress).